The following is a 593-amino-acid chain: Translation initiation factor IF-2 (593 aa).

Positions 101–270 (LRPPVVTIMG…LLIAELEDLR (170 aa)) constitute a tr-type G domain. The interval 110–117 (GHVDHGKT) is G1. A GTP-binding site is contributed by 110 to 117 (GHVDHGKT). The interval 135–139 (GITQH) is G2. The interval 156–159 (DTPG) is G3. Residues 156-160 (DTPGH) and 210-213 (NKMD) contribute to the GTP site. The tract at residues 210–213 (NKMD) is G4. The tract at residues 246–248 (SAR) is G5.

This sequence belongs to the TRAFAC class translation factor GTPase superfamily. Classic translation factor GTPase family. IF-2 subfamily.

It localises to the cytoplasm. One of the essential components for the initiation of protein synthesis. Protects formylmethionyl-tRNA from spontaneous hydrolysis and promotes its binding to the 30S ribosomal subunits. Also involved in the hydrolysis of GTP during the formation of the 70S ribosomal complex. This Dehalococcoides mccartyi (strain CBDB1) protein is Translation initiation factor IF-2.